We begin with the raw amino-acid sequence, 262 residues long: Shikimate dehydrogenase (NADP(+)) (262 aa).

Shikimate is bound by residues 15 to 17 (SRS) and T62. The active-site Proton acceptor is K66. An NADP(+)-binding site is contributed by E78. 2 residues coordinate shikimate: N87 and D102. NADP(+) contacts are provided by residues 126-130 (GAGGA), 150-155 (NRTLAR), and M214. A shikimate-binding site is contributed by Y216. G236 serves as a coordination point for NADP(+).

This sequence belongs to the shikimate dehydrogenase family. Homodimer.

The enzyme catalyses shikimate + NADP(+) = 3-dehydroshikimate + NADPH + H(+). Its pathway is metabolic intermediate biosynthesis; chorismate biosynthesis; chorismate from D-erythrose 4-phosphate and phosphoenolpyruvate: step 4/7. Functionally, involved in the biosynthesis of the chorismate, which leads to the biosynthesis of aromatic amino acids. Catalyzes the reversible NADPH linked reduction of 3-dehydroshikimate (DHSA) to yield shikimate (SA). This is Shikimate dehydrogenase (NADP(+)) from Acinetobacter baumannii (strain ATCC 17978 / DSM 105126 / CIP 53.77 / LMG 1025 / NCDC KC755 / 5377).